The primary structure comprises 147 residues: 3-dehydroquinate dehydratase (147 aa).

Y23 (proton acceptor) is an active-site residue. Substrate-binding residues include N75, H81, and D88. H101 acts as the Proton donor in catalysis. Residues 102-103 (LS) and R112 contribute to the substrate site.

It belongs to the type-II 3-dehydroquinase family. In terms of assembly, homododecamer.

The catalysed reaction is 3-dehydroquinate = 3-dehydroshikimate + H2O. The protein operates within metabolic intermediate biosynthesis; chorismate biosynthesis; chorismate from D-erythrose 4-phosphate and phosphoenolpyruvate: step 3/7. Its function is as follows. Catalyzes a trans-dehydration via an enolate intermediate. This chain is 3-dehydroquinate dehydratase, found in Stenotrophomonas maltophilia (strain K279a).